A 554-amino-acid chain; its full sequence is MQKEKVWDKLSTDTEERMNAANELFSDRKVVPSQNGVALLEAVIRAGDRINLEGNNQKQADFLAECLGSCDSEKINNLHMVQSAVPLPIHLDIFDKGIAKKLDFAYGGPMAAKVAEFLREGKLELGAIHTYLELFARYFMDLTPRVSLICAYEGDKDGNLYTGFNTEDTPVIAEATKFRQGIVIAQVNKLVDKVQRVDIPGEWVDAVIESPKPFYLEPLFTRDPANITDTQVLMGMMALKGIYGEYGVQRLNHGIGFFTAAIELLLPTYGNELGLKGKICKHFALNPHPTMIPAIEDGWVESIHSFGGELGMQKYCEARPDIFFIGPDGSMRSNRAYSQTAGHYATDMFIGGTLQIDKYGNSSTATASRVAGFGGAPNMGCDAKGRRHVTDSWLKCGAEFEDQAALLGDMPRGKRLVVQMQETFKEKMDPSFVEKLDAWNLAKNANLDLAPVMIYSDDLTHIVTEEGIAYLAKCRGLEERMAAIRGVAGYTEVGLSADPKETKTLRERGIVKTPEDLGIDRSRANRSMLAAKSVKDLVDCSGGLYEPPARFVNW.

The protein localises to the cytoplasm. It carries out the reaction acetyl-[ACP] + malonate = malonyl-[ACP] + acetate. In terms of biological role, alpha subunit of the biotin-independent and biotin-dependent malonate decarboxylase multienzyme complex (EC 4.1.1.88 and EC 7.2.4.4, respectively). Acts as an acyl-carrier protein (ACP) transferase component. This first step in malonate decarboxylation involves the exchange of an acetyl thioester residue bound to the activated ACP subunit for a malonyl thioester residue. Has a weak activity with acetyl-CoA as substrate. The polypeptide is Acetyl-S-ACP:malonate ACP transferase (madA) (Malonomonas rubra).